Reading from the N-terminus, the 275-residue chain is Translation initiation factor 2 subunit alpha (275 aa).

The S1 motif domain maps to 12–83 (GELVVATVKR…KKGHIDLSLR (72 aa)).

The protein belongs to the eIF-2-alpha family. Heterotrimer composed of an alpha, a beta and a gamma chain.

Functionally, eIF-2 functions in the early steps of protein synthesis by forming a ternary complex with GTP and initiator tRNA. This Pyrococcus furiosus (strain ATCC 43587 / DSM 3638 / JCM 8422 / Vc1) protein is Translation initiation factor 2 subunit alpha.